Reading from the N-terminus, the 644-residue chain is SPbeta prophage-derived uncharacterized protein YomE (644 aa).

This Bacillus subtilis (strain 168) protein is SPbeta prophage-derived uncharacterized protein YomE (yomE).